Here is a 286-residue protein sequence, read N- to C-terminus: Acetylglutamate kinase (286 aa).

Residues 63-64 (GG), R85, and N178 contribute to the substrate site.

This sequence belongs to the acetylglutamate kinase family. ArgB subfamily.

The protein localises to the cytoplasm. The catalysed reaction is N-acetyl-L-glutamate + ATP = N-acetyl-L-glutamyl 5-phosphate + ADP. It functions in the pathway amino-acid biosynthesis; L-arginine biosynthesis; N(2)-acetyl-L-ornithine from L-glutamate: step 2/4. Its function is as follows. Catalyzes the ATP-dependent phosphorylation of N-acetyl-L-glutamate. This chain is Acetylglutamate kinase, found in Clostridioides difficile (strain 630) (Peptoclostridium difficile).